Here is a 199-residue protein sequence, read N- to C-terminus: Guanylate kinase (199 aa).

The region spanning 20-198 (GKLIVLTGPS…ALQAIEVALF (179 aa)) is the Guanylate kinase-like domain. Residue 27–34 (GPSGVGKG) participates in ATP binding.

It belongs to the guanylate kinase family.

The protein resides in the cytoplasm. It carries out the reaction GMP + ATP = GDP + ADP. Its function is as follows. Essential for recycling GMP and indirectly, cGMP. The polypeptide is Guanylate kinase (Trichormus variabilis (strain ATCC 29413 / PCC 7937) (Anabaena variabilis)).